We begin with the raw amino-acid sequence, 750 residues long: Photosystem I P700 chlorophyll a apoprotein A1 (750 aa).

The next 8 membrane-spanning stretches (helical) occupy residues valine 70–alanine 93, leucine 156–histidine 179, leucine 195–leucine 219, isoleucine 291–tyrosine 309, tryptophan 346–tyrosine 369, leucine 385–valine 411, alanine 433–histidine 455, and phenylalanine 531–leucine 549. Positions 573 and 582 each coordinate [4Fe-4S] cluster. A run of 2 helical transmembrane segments spans residues histidine 589 to tryptophan 610 and leucine 664 to phenylalanine 686. Histidine 675 is a binding site for chlorophyll a'. Chlorophyll a-binding residues include methionine 683 and tyrosine 691. Tryptophan 692 contacts phylloquinone. The chain crosses the membrane as a helical span at residues alanine 724–alanine 744.

Belongs to the PsaA/PsaB family. In terms of assembly, the PsaA/B heterodimer binds the P700 chlorophyll special pair and subsequent electron acceptors. PSI consists of a core antenna complex that captures photons, and an electron transfer chain that converts photonic excitation into a charge separation. The eukaryotic PSI reaction center is composed of at least 11 subunits. P700 is a chlorophyll a/chlorophyll a' dimer, A0 is one or more chlorophyll a, A1 is one or both phylloquinones and FX is a shared 4Fe-4S iron-sulfur center. is required as a cofactor.

The protein resides in the plastid. It is found in the chloroplast thylakoid membrane. The catalysed reaction is reduced [plastocyanin] + hnu + oxidized [2Fe-2S]-[ferredoxin] = oxidized [plastocyanin] + reduced [2Fe-2S]-[ferredoxin]. PsaA and PsaB bind P700, the primary electron donor of photosystem I (PSI), as well as the electron acceptors A0, A1 and FX. PSI is a plastocyanin-ferredoxin oxidoreductase, converting photonic excitation into a charge separation, which transfers an electron from the donor P700 chlorophyll pair to the spectroscopically characterized acceptors A0, A1, FX, FA and FB in turn. Oxidized P700 is reduced on the lumenal side of the thylakoid membrane by plastocyanin. In Nasturtium officinale (Watercress), this protein is Photosystem I P700 chlorophyll a apoprotein A1.